The following is a 449-amino-acid chain: Neurexin-1a-beta (449 aa).

The first 38 residues, 1–38 (MLRLWPGGAPGGLASILLRISLRLALWLPPLTLGSALA), serve as a signal peptide directing secretion. Residues 39-373 (EGPGELYVPQ…EVIRESSSTT (335 aa)) lie on the Extracellular side of the membrane. The region spanning 71-272 (TTYIFGRDGG…DPNVRVEGSA (202 aa)) is the Laminin G-like domain. A disordered region spans residues 276–366 (GDMPSSSITP…AKGYPSPEVI (91 aa)). The span at 280–311 (SSSITPQSSVSAAGNRSETSPSITDITTTTAS) shows a compositional bias: low complexity. Over residues 312 to 322 (NRQGKQTTTPQ) the composition is skewed to polar residues. The helical transmembrane segment at 374–394 (GMVVGIVAAAALCILILLYAM) threads the bilayer. The Cytoplasmic portion of the chain corresponds to 395–449 (YKYRNRDEGSYHVDESRNYISNSATQPNGAAVKEKPIGVPKNKKDKKNKDKEYYV). Residues 415–449 (SNSATQPNGAAVKEKPIGVPKNKKDKKNKDKEYYV) form a disordered region.

This sequence belongs to the neurexin family.

It is found in the membrane. In terms of biological role, neuronal cell surface protein that may be involved in cell recognition and cell adhesion. May play a role in formation or maintenance of synaptic junctions. This Danio rerio (Zebrafish) protein is Neurexin-1a-beta (nrxn1a).